We begin with the raw amino-acid sequence, 213 residues long: MKKGLFITVEGGEGAGKTTIINLVQEQLATQGYEVIRTREPGGVELAEQIRDLLLHTQGVEMDNRTEALLYAAARREHLIKKIVPALAEGALVLCDRYIDSSLVYQGHARGIGMEEVRAINGFAIETYMPDLTLYFDVEPEIGLERVQKDAVRSWNRLDQETLTFHKRVQEGYKKLLKAEPERIKAIDANRSFAEVFHDTMEEINRMLLSTKD.

Position 11-18 (11-18) interacts with ATP; that stretch reads GGEGAGKT.

This sequence belongs to the thymidylate kinase family.

The enzyme catalyses dTMP + ATP = dTDP + ADP. Phosphorylation of dTMP to form dTDP in both de novo and salvage pathways of dTTP synthesis. The sequence is that of Thymidylate kinase from Shouchella clausii (strain KSM-K16) (Alkalihalobacillus clausii).